We begin with the raw amino-acid sequence, 391 residues long: 3-ketoacyl-CoA thiolase (391 aa).

C95 (acyl-thioester intermediate) is an active-site residue. Catalysis depends on proton acceptor residues H347 and C377.

Belongs to the thiolase-like superfamily. Thiolase family. Heterotetramer of two alpha chains (FadB) and two beta chains (FadA).

Its subcellular location is the cytoplasm. The catalysed reaction is an acyl-CoA + acetyl-CoA = a 3-oxoacyl-CoA + CoA. Its pathway is lipid metabolism; fatty acid beta-oxidation. Catalyzes the final step of fatty acid oxidation in which acetyl-CoA is released and the CoA ester of a fatty acid two carbons shorter is formed. This chain is 3-ketoacyl-CoA thiolase, found in Hahella chejuensis (strain KCTC 2396).